The sequence spans 361 residues: Beta-hexosaminidase (361 aa).

Substrate-binding positions include D69, R77, R144, and K174 to H175. Residue H187 is the Proton donor/acceptor of the active site. The active-site Nucleophile is the D258.

It belongs to the glycosyl hydrolase 3 family. NagZ subfamily.

The protein localises to the cytoplasm. The enzyme catalyses Hydrolysis of terminal non-reducing N-acetyl-D-hexosamine residues in N-acetyl-beta-D-hexosaminides.. Its pathway is cell wall biogenesis; peptidoglycan recycling. In terms of biological role, plays a role in peptidoglycan recycling by cleaving the terminal beta-1,4-linked N-acetylglucosamine (GlcNAc) from peptide-linked peptidoglycan fragments, giving rise to free GlcNAc, anhydro-N-acetylmuramic acid and anhydro-N-acetylmuramic acid-linked peptides. In Neisseria meningitidis serogroup B (strain ATCC BAA-335 / MC58), this protein is Beta-hexosaminidase.